The following is a 424-amino-acid chain: UDP-sugar transporter protein SLC35A5 (424 aa).

Residues 1–8 are Cytoplasmic-facing; that stretch reads MEKQCCSH. Residues 9-29 form a helical membrane-spanning segment; sequence PVICSLSTMYTFLLGAIFIAL. Over 30–53 the chain is Lumenal; that stretch reads SSSRILLVKYSANEENKYDYLPTT. A helical membrane pass occupies residues 54 to 74; it reads ANVCSELVKLVFCVLVSFCVI. The Cytoplasmic portion of the chain corresponds to 75-93; sequence KKDHQSRNLKYASWKEFSN. A helical membrane pass occupies residues 94–116; it reads FMKWSIPAFLYFLDNLIVFYVLS. Over 117 to 119 the chain is Lumenal; the sequence is YLQ. The chain crosses the membrane as a helical span at residues 120 to 142; that stretch reads PAMAVIFSNFSIITTALLFRIVL. Over 143–147 the chain is Cytoplasmic; the sequence is KRRLN. A helical transmembrane segment spans residues 148–168; that stretch reads WIQWASLLILFLSIVALTAGT. Residues 169 to 228 lie on the Lumenal side of the membrane; the sequence is KTLQHNLAGHGFHHDAFFSPSNSCLLFRSECPRKDNCTAKEWTFPEAKWNTTARVFSHIR. N-linked (GlcNAc...) asparagine glycosylation is present at asparagine 204. Residues 229-249 form a helical membrane-spanning segment; sequence LGMGHVLIIVQCFISSMANIY. Over 250–263 the chain is Cytoplasmic; the sequence is NEKILKEGNQLAES. A helical membrane pass occupies residues 264–284; it reads IFIQNSKLYFFGILFNGLTLG. Residues 285 to 303 are Lumenal-facing; that stretch reads LQRSNRDQIKNCGFFYGHN. The chain crosses the membrane as a helical span at residues 304 to 324; that stretch reads AFSVALIFVTAFQGLSVAFIL. Residues 325–330 are Cytoplasmic-facing; the sequence is KFLDNM. The chain crosses the membrane as a helical span at residues 331-351; that stretch reads FHVLMAQVTTVIITTVSVLVF. Over 352–354 the chain is Lumenal; the sequence is DFR. Residues 355–375 traverse the membrane as a helical segment; it reads PSLEFFLEAPSVLLSIFIYNA. At 376–424 the chain is on the cytoplasmic side; that stretch reads SKPQGPEYAPRQERIRDLSGNLWERSSGDGEELERLTKPKSDESDEDTF. Phosphoserine is present on residues serine 394, serine 416, and serine 419. Positions 395 to 424 are disordered; the sequence is GNLWERSSGDGEELERLTKPKSDESDEDTF. Residues 408–417 show a composition bias toward basic and acidic residues; sequence LERLTKPKSD.

This sequence belongs to the nucleotide-sugar transporter family. SLC35A subfamily. Probably forms homooligomers and heterooligomers with SLC35A1, SLC35A2, SLC35A3 and SLC35A4.

The protein resides in the golgi apparatus membrane. It carries out the reaction UMP(out) + UDP-alpha-D-glucuronate(in) = UMP(in) + UDP-alpha-D-glucuronate(out). It catalyses the reaction UMP(out) + UDP-N-acetyl-alpha-D-glucosamine(in) = UMP(in) + UDP-N-acetyl-alpha-D-glucosamine(out). The catalysed reaction is UDP-N-acetyl-alpha-D-galactosamine(in) + UMP(out) = UDP-N-acetyl-alpha-D-galactosamine(out) + UMP(in). Its function is as follows. Probable UDP-sugar:UMP transmembrane antiporter involved in UDP-alpha-D-glucuronate/UDP-GlcA, UDP-GlcNAc/UDP-N-acetyl-alpha-D-glucosamine and UDP-N-acetyl-alpha-D-galactosamine/UDP-GalNAc transport from the cytosol to the lumen of the Golgi. The chain is UDP-sugar transporter protein SLC35A5 from Pongo abelii (Sumatran orangutan).